The primary structure comprises 89 residues: MKTLLLTLVVVTIVCLDLGDSLICYLDFSVPHTCAPGEKLCYTRTWNDGRGTRIERGCAATCPIPKKPEIHVTCCSTDRCNPHPKQKPH.

Residues 1 to 21 (MKTLLLTLVVVTIVCLDLGDS) form the signal peptide. Cystine bridges form between Cys-24–Cys-41, Cys-34–Cys-58, Cys-62–Cys-74, and Cys-75–Cys-80.

Belongs to the three-finger toxin family. Long-chain subfamily. Type II alpha-neurotoxin sub-subfamily. Expressed by the venom gland.

The protein localises to the secreted. Functionally, binds with high affinity to muscular (alpha-1/CHRNA1) and neuronal (alpha-7/CHRNA7) nicotinic acetylcholine receptor (nAChR) and inhibits acetylcholine from binding to the receptor, thereby impairing neuromuscular and neuronal transmission. The sequence is that of Long neurotoxin 1 from Pseudonaja textilis (Eastern brown snake).